The sequence spans 384 residues: Dual-specificity RNA methyltransferase RlmN (384 aa).

Glu105 functions as the Proton acceptor in the catalytic mechanism. Positions 111-350 (EDDRATLCVS…TIVRKTRGDD (240 aa)) constitute a Radical SAM core domain. An intrachain disulfide couples Cys118 to Cys355. [4Fe-4S] cluster contacts are provided by Cys125, Cys129, and Cys132. Residues 179–180 (GE), Ser211, 233–235 (SLH), and Asn312 each bind S-adenosyl-L-methionine. Cys355 serves as the catalytic S-methylcysteine intermediate.

This sequence belongs to the radical SAM superfamily. RlmN family. It depends on [4Fe-4S] cluster as a cofactor.

Its subcellular location is the cytoplasm. The enzyme catalyses adenosine(2503) in 23S rRNA + 2 reduced [2Fe-2S]-[ferredoxin] + 2 S-adenosyl-L-methionine = 2-methyladenosine(2503) in 23S rRNA + 5'-deoxyadenosine + L-methionine + 2 oxidized [2Fe-2S]-[ferredoxin] + S-adenosyl-L-homocysteine. It catalyses the reaction adenosine(37) in tRNA + 2 reduced [2Fe-2S]-[ferredoxin] + 2 S-adenosyl-L-methionine = 2-methyladenosine(37) in tRNA + 5'-deoxyadenosine + L-methionine + 2 oxidized [2Fe-2S]-[ferredoxin] + S-adenosyl-L-homocysteine. Functionally, specifically methylates position 2 of adenine 2503 in 23S rRNA and position 2 of adenine 37 in tRNAs. m2A2503 modification seems to play a crucial role in the proofreading step occurring at the peptidyl transferase center and thus would serve to optimize ribosomal fidelity. This is Dual-specificity RNA methyltransferase RlmN from Escherichia coli O157:H7.